The chain runs to 583 residues: MVRPADSSVDAQRAREQFLSAGALQPDAVAPSVLNSWQRSRELQVHPDRVDLPYLRDPDTDTPLMHAAAPVLRRIAEDLSDQAVSVVLTSADGLVLDRIAADTEFERILDDVRLARGYSYAEEFAGTNGIGTALETGQPAFIRGSEHYVGTLGGLACAGSPIREPVTRRILGVVDLTCWARQADPLLFVLAKSAGSQIEDRLRTMNNETETALLDAYLKQSRRYPGGVLAIGGDVVLMNRYLRQALDAADQTVLLDHAAELTRSSFTSTTVAQLPSGASVKISAAERIMVGVRGDSVVLHVSVHVAESIPVRGSQHIPRLAGRSSSFRRSAHQVERCYRDREWVVIEGEKGSGRTHLGYSVARFVTPEKTIPVLRIGDFETPESFVAAFDSETDDADFAVIVADVDELPDEVLHPLAAVMQTRAGRGWIAATTSAERDSQLVDMLMLPFFIHTVTVPALRHRIEDLHELVPMLLNELSRGEARMDAEAMRQLAKLPWPGNIAQLRHVLTETLRRQRSGVIGADKLPSECRSVTRRKLTRLEAMERDAIVRSLLENDGNKAEAAEALGMSRATIYRKIKDFGIA.

Positions 320–513 (LAGRSSSFRR…LRHVLTETLR (194 aa)) constitute a Sigma-54 factor interaction domain. Residues 348-355 (GEKGSGRT) and 395-404 (DADFAVIVAD) contribute to the ATP site.

Its function is as follows. Acts as a transcriptional activator of the mimABCD operon encoding the propane 2-monooxygenase complex. In Mycolicibacterium goodii (Mycobacterium goodii), this protein is Propane 2-monooxygenase operon transcriptional activator MimR.